The following is a 101-amino-acid chain: Small ribosomal subunit protein uS14 (101 aa).

Belongs to the universal ribosomal protein uS14 family. In terms of assembly, part of the 30S ribosomal subunit. Contacts proteins S3 and S10.

In terms of biological role, binds 16S rRNA, required for the assembly of 30S particles and may also be responsible for determining the conformation of the 16S rRNA at the A site. The chain is Small ribosomal subunit protein uS14 from Francisella tularensis subsp. novicida (strain U112).